We begin with the raw amino-acid sequence, 489 residues long: Rhamnulokinase (489 aa).

13–17 lines the ATP pocket; the sequence is ASSGR. Cysteines 68 and 222 form a disulfide. Residues G83 and 236 to 238 each bind substrate; that span reads HDT. The active-site Proton acceptor is D237. ATP is bound at residue T259. N296 serves as a coordination point for substrate. Q304 contributes to the ATP binding site. A disulfide bond links C353 and C370. G402 contacts ATP. C413 and C417 are joined by a disulfide.

It belongs to the rhamnulokinase family. Monomer. Requires Mg(2+) as cofactor.

It catalyses the reaction L-rhamnulose + ATP = L-rhamnulose 1-phosphate + ADP + H(+). It functions in the pathway carbohydrate degradation; L-rhamnose degradation; glycerone phosphate from L-rhamnose: step 2/3. Involved in the catabolism of L-rhamnose (6-deoxy-L-mannose). Catalyzes the transfer of the gamma-phosphate group from ATP to the 1-hydroxyl group of L-rhamnulose to yield L-rhamnulose 1-phosphate. This is Rhamnulokinase from Escherichia coli O9:H4 (strain HS).